Reading from the N-terminus, the 441-residue chain is Nucleoprotein (441 aa).

The segment at 1–56 is disordered; that stretch reads MSYTPGHHAGSRSSSGNRSGILKKTSWVDQSERSHQTYNRGRKPQPKFTVSTQPQG. Residues 11–20 show a composition bias toward low complexity; the sequence is SRSSSGNRSG. The tract at residues 53–193 is RNA-binding; it reads QPQGNPIPHY…GYYVEGSGRS (141 aa). The CoV N NTD domain maps to 60–189; sequence PHYSWFSGIT…ILPQGYYVEG (130 aa). Residues arginine 105 and arginine 121 each contribute to the RNA site. Residue serine 158 is modified to Phosphoserine; by host. Arginine 163 lines the RNA pocket. Threonine 173 is modified (phosphothreonine; by host). The disordered stretch occupies residues 186–226; sequence YVEGSGRSASNSRPGSRSQSRGPNNRSLSRSNSNFRHSDSI. Over residues 189-220 the composition is skewed to low complexity; that stretch reads GSGRSASNSRPGSRSQSRGPNNRSLSRSNSNF. Phosphoserine; by host is present on serine 190. Positions 257 to 379 constitute a CoV N CTD domain; the sequence is AKEIRHKILM…ENLDAYVNSN (123 aa). The tract at residues 264–382 is dimerization; the sequence is ILMKPRQKRT…DAYVNSNQNT (119 aa). A compositionally biased stretch (polar residues) spans 380 to 389; sequence QNTVSGSLSP. The disordered stretch occupies residues 380 to 408; it reads QNTVSGSLSPKPQRKRGVKQSPESFDSLN. Phosphoserine; by host occurs at positions 388 and 417. Threonine 421 is modified (phosphothreonine; by host).

It belongs to the betacoronavirus nucleocapsid protein family. Homooligomer. Both monomeric and oligomeric forms interact with RNA. Interacts with protein M. Interacts with NSP3; this interaction serves to tether the genome to the newly translated replicase-transcriptase complex at a very early stage of infection. Post-translationally, ADP-ribosylated. The ADP-ribosylation is retained in the virion during infection. Phosphorylated on serine and threonine residues.

The protein resides in the virion. It localises to the host endoplasmic reticulum-Golgi intermediate compartment. Its subcellular location is the host Golgi apparatus. Packages the positive strand viral genome RNA into a helical ribonucleocapsid (RNP) and plays a fundamental role during virion assembly through its interactions with the viral genome and membrane protein M. Plays an important role in enhancing the efficiency of subgenomic viral RNA transcription as well as viral replication. The polypeptide is Nucleoprotein (Homo sapiens (Human)).